Reading from the N-terminus, the 498-residue chain is UPF0371 protein cauri_2449 (498 aa).

This sequence belongs to the UPF0371 family.

This is UPF0371 protein cauri_2449 from Corynebacterium aurimucosum (strain ATCC 700975 / DSM 44827 / CIP 107346 / CN-1) (Corynebacterium nigricans).